The chain runs to 493 residues: MNSTSLYAAIDLGSNSFHMLVVREAAGSIQTLTRIKRKVRLAAGLNNDNHLSAEAMERGWQCLRLFAERLQDIPQPQIRVVATATLRLAVNAGEFIAKAQTILGCPVQVISGEEEARLIYQGVAHTTGGADQRLVVDIGGASTELVTGTGAQTTSLFSLSMGCVTWLERYFSDRNLAQENFDDAEKAARDVLRPVADELRFHGWKVCVGASGTVQALQEIMMAQGMDERITLAKLQQLKQRAIQCGRLEELEIEGLTLERALVFPSGLAILIAIFTELNIQSMTLAGGALREGLVYGMLHLAVDQDIRSRTLQNIQRRFIVDTDQANRVAKLADNFLKQVENAWHIEPISRELLLSACQLHEIGLSVDFKQAPYHAAYLVRHLDLPGYTPAQKKLLATLLLNQTNPVDLSSLHQQNAVPPRVAEQLCRLLRLAILFAGRRRDDLVPEITLRALNENLTLTLPGDWLAHHPLGKELIDQESQWQSYVHWPLDVR.

Belongs to the GppA/Ppx family. GppA subfamily.

It catalyses the reaction guanosine 3'-diphosphate 5'-triphosphate + H2O = guanosine 3',5'-bis(diphosphate) + phosphate + H(+). It functions in the pathway purine metabolism; ppGpp biosynthesis; ppGpp from GTP: step 2/2. In terms of biological role, catalyzes the conversion of pppGpp to ppGpp. Guanosine pentaphosphate (pppGpp) is a cytoplasmic signaling molecule which together with ppGpp controls the 'stringent response', an adaptive process that allows bacteria to respond to amino acid starvation, resulting in the coordinated regulation of numerous cellular activities. This Salmonella choleraesuis (strain SC-B67) protein is Guanosine-5'-triphosphate,3'-diphosphate pyrophosphatase.